We begin with the raw amino-acid sequence, 539 residues long: Putative S-adenosyl-L-methionine-dependent methyltransferase MAP_4079 (539 aa).

Residues Asp134 and 163–164 contribute to the S-adenosyl-L-methionine site; that span reads DL. Residues 290–392 form a disordered region; it reads AGYGRGRRRP…RGEPGERGGQ (103 aa). Polar residues predominate over residues 301–313; it reads SATSCRGTCSSPR. Positions 341–351 are enriched in gly residues; it reads HGFGNQCGGPD.

Belongs to the UPF0677 family.

Functionally, exhibits S-adenosyl-L-methionine-dependent methyltransferase activity. The protein is Putative S-adenosyl-L-methionine-dependent methyltransferase MAP_4079 of Mycolicibacterium paratuberculosis (strain ATCC BAA-968 / K-10) (Mycobacterium paratuberculosis).